The primary structure comprises 446 residues: MEEKAGLGRLQNQQDEPAQDPHQRAGPRATFHSDRNHPNKEAEAMEGQNPACSRHASSHSIQPQASKPKKHRNYLDGAAVDDLKSLWDRLQTLQQSLTNMPYAEGLKPLKNFASFEELLSMGGDSLLNDLLDIQDSITQCCMKVSKYLNKDGSCASLNYYKQPFIAAVYGPTGCGKSQLLRNLMSAQLIVPAPETVFFITPQVDMIPPQEIAAWETQICEGNFLAGPENTVVPQSGSIMPKFVQMSYAELTNEANYDVTNPTNVFARAASKGPLAIVMDECMEDLGGNRGIAKFFHAFPSKLLDRFPKCTGYSVIVVLHNMNPRRDQGGNIANLKIQAKMHIISPKVHPSQLNRFINIYTKGQPTAISLLLKDIFNYHRLNTNFDWIVYNTEPIDNCMHWLYLSPDEGLIPMYLNIQAKVYQAMERIHRTITDRQRWTRYYHSKKK.

The disordered stretch occupies residues 1-71; the sequence is MEEKAGLGRL…QPQASKPKKH (71 aa). The span at 31 to 43 shows a compositional bias: basic and acidic residues; that stretch reads FHSDRNHPNKEAE. Residue 170–177 coordinates ATP; it reads GPTGCGKS. A DNA-binding region spans residues 439 to 446; that stretch reads RYYHSKKK.

It belongs to the adenoviridae packaging protein 1 family. Homodimer. Part of a genome packaging complex composed of packaging proteins 1, 2 and 3; this complex specifically binds to the packaging sequence on the left end of viral genomic DNA and performs packaging of the viral genome. Interacts with protein 33K.

The protein localises to the virion. It is found in the host nucleus. The protein resides in the host nucleoplasm. Its subcellular location is the host nucleolus. Functionally, component of the packaging machinery which encapsidates the viral DNA into preformed capsids and transcriptional activator of the viral major late promoter (MLP). Binds, along with packaging proteins 2 and 3, to the specific packaging sequence on the left end of viral genomic DNA and displays ATPase activity thereby providing the power stroke of the packaging machinery. The activity of packaging protein IVa2 is stimulated by protein 33K which acts as a terminase. May be the protein that pumps DNA into the capsid powered by ATP hydrolysis. Specifically binds to the 5'-CG-3' nucleotides of the repeats making up the packaging sequence. Component of the DEF-A and DEF-B transcription factors that bind downstream elements of the major late promoter (MLP), and stimulate transcription from the MLP after initiation of viral DNA replication. DEF-A is a heterodimer packaging proteins 1 and 2 and DEF-B is a homodimer of packaging protein 1. The protein is Packaging protein 1 of Canine adenovirus serotype 2 (strain Toronto A 26-61) (CAdV-2).